The primary structure comprises 777 residues: Rho-GTPase-activating protein 8 (777 aa).

In terms of domain architecture, F-BAR spans Ser-3–Asp-420. A coiled-coil region spans residues Gln-117–Ile-172. Positions Val-213–Gly-296 constitute a DEP domain. The region spanning Val-454–Phe-650 is the Rho-GAP domain. The tract at residues Leu-667–Ser-709 is disordered. Positions Tyr-668 to Ser-692 are enriched in polar residues. Ser-676 and Ser-680 each carry phosphoserine. The residue at position 682 (Thr-682) is a Phosphothreonine. Position 686 is a phosphoserine (Ser-686). Thr-694 carries the phosphothreonine modification. Residue Ser-698 is modified to Phosphoserine.

In terms of assembly, interacts with pak1/shk1. Phosphorylated by pak1/shk1.

It is found in the cytoplasm. Its function is as follows. Acts in signal transduction. Negatively regulates the pak1/shk1 control pathway. In Schizosaccharomyces pombe (strain 972 / ATCC 24843) (Fission yeast), this protein is Rho-GTPase-activating protein 8 (rga8).